Consider the following 287-residue polypeptide: Cysteine-rich repeat secretory protein 58 (287 aa).

The first 20 residues, 1 to 20 (METTKKLFALLCLFVTMNQA), serve as a signal peptide directing secretion. Over 21–267 (ISVSDPDDME…GSFSHRGNNK (247 aa)) the chain is Extracellular. Gnk2-homologous domains are found at residues 28 to 130 (DMET…DKFF) and 135 to 246 (ETNP…TYNS). Residues Asn-39, Asn-43, Asn-59, Asn-68, Asn-89, Asn-99, Asn-107, Asn-208, and Asn-245 are each glycosylated (N-linked (GlcNAc...) asparagine). Residues 268-286 (LLGGMVLAVSVSVFAFLSL) traverse the membrane as a helical segment. A topological domain (cytoplasmic) is located at residue Val-287.

Belongs to the cysteine-rich repeat secretory protein family.

It localises to the membrane. The polypeptide is Cysteine-rich repeat secretory protein 58 (CRRSP58) (Arabidopsis thaliana (Mouse-ear cress)).